The chain runs to 666 residues: Probable potassium transport system protein Kup (666 aa).

12 consecutive transmembrane segments (helical) span residues 16-36 (GFII…LYTI), 58-78 (ISLI…LIAL), 100-120 (PWLI…GALT), 141-161 (IYQN…VLFG), 165-185 (FGTG…FSFL), 221-241 (IFIL…YSDL), 253-273 (WPFV…WILA), 294-314 (VYLV…LISG), 343-363 (LYIP…VLAF), 373-393 (YGLA…YYLI), 399-419 (PILA…FFLA), and 424-444 (FMHG…VMFI).

The protein belongs to the HAK/KUP transporter (TC 2.A.72) family.

It is found in the cell membrane. It catalyses the reaction K(+)(in) + H(+)(in) = K(+)(out) + H(+)(out). Functionally, transport of potassium into the cell. Likely operates as a K(+):H(+) symporter. This Streptococcus pyogenes serotype M1 protein is Probable potassium transport system protein Kup.